The primary structure comprises 668 residues: MAP kinase kinase PBS2 (668 aa).

Basic and acidic residues predominate over residues 1–15 (MEDKFANLSLHEKTG). Disordered stretches follow at residues 1-43 (MEDK…SSHY), 61-120 (RALK…ASSK), and 181-313 (NPNR…GSSG). 3 stretches are compositionally biased toward polar residues: residues 16-43 (KSSIQLNEQTGSDNGSAVKRTSSTSSHY), 68-91 (SVGSNQSEQDKGSSQSPKHIQQIV), and 104-120 (SKVSQRMSSQVVQASSK). Ser68 bears the Phosphoserine mark. Low complexity predominate over residues 239-250 (AQQPQQFAPSPS). Phosphoserine is present on Ser269. Over residues 270-300 (NPGSLINGVQSTSTSSSTEGPHDTVGTTPRT) the composition is skewed to polar residues. Low complexity predominate over residues 301 to 310 (GNSNNSSNSG). The 264-residue stretch at 360 to 623 (LEFLDELGHG…YAALTEHPWL (264 aa)) folds into the Protein kinase domain. ATP-binding positions include 366–374 (LGHGNYGNV) and Lys389. Residue Asp485 is the Proton acceptor of the active site. Ser514 bears the Phosphoserine mark. The residue at position 518 (Thr518) is a Phosphothreonine.

Belongs to the protein kinase superfamily. STE Ser/Thr protein kinase family. MAP kinase kinase subfamily. Interacts with NBP2, PTC1, SHO1 and STE11. In terms of processing, activated by phosphorylation by SSK2 or SSK22. Ser/Thr phosphorylation is also necessary for SHO1-mediated activation.

The protein localises to the cytoplasm. It catalyses the reaction L-seryl-[protein] + ATP = O-phospho-L-seryl-[protein] + ADP + H(+). The enzyme catalyses L-threonyl-[protein] + ATP = O-phospho-L-threonyl-[protein] + ADP + H(+). The catalysed reaction is L-tyrosyl-[protein] + ATP = O-phospho-L-tyrosyl-[protein] + ADP + H(+). Its function is as follows. Kinase involved in a signal transduction pathway that is activated by changes in the osmolarity of the extracellular environment. Activates the MAP kinase HOG1 by concomitant phosphorylation at 'Thr-174' and 'Tyr-176'. In Saccharomyces cerevisiae (strain ATCC 204508 / S288c) (Baker's yeast), this protein is MAP kinase kinase PBS2 (PBS2).